Here is a 102-residue protein sequence, read N- to C-terminus: UPF0213 protein XAC3202 (102 aa).

A GIY-YIG domain is found at 5 to 80 (KPWHLYLLLC…KRLPRARKLA (76 aa)).

The protein belongs to the UPF0213 family.

The protein is UPF0213 protein XAC3202 of Xanthomonas axonopodis pv. citri (strain 306).